The primary structure comprises 283 residues: Pantothenate synthetase (283 aa).

Position 30–37 (30–37 (MGALHEGH)) interacts with ATP. His-37 (proton donor) is an active-site residue. Gln-61 contacts (R)-pantoate. Gln-61 is a binding site for beta-alanine. 149–152 (GEKD) provides a ligand contact to ATP. Gln-155 serves as a coordination point for (R)-pantoate. Residues Leu-178 and 186–189 (RSSR) each bind ATP.

Belongs to the pantothenate synthetase family. In terms of assembly, homodimer.

The protein resides in the cytoplasm. It catalyses the reaction (R)-pantoate + beta-alanine + ATP = (R)-pantothenate + AMP + diphosphate + H(+). It participates in cofactor biosynthesis; (R)-pantothenate biosynthesis; (R)-pantothenate from (R)-pantoate and beta-alanine: step 1/1. In terms of biological role, catalyzes the condensation of pantoate with beta-alanine in an ATP-dependent reaction via a pantoyl-adenylate intermediate. This chain is Pantothenate synthetase, found in Christiangramia forsetii (strain DSM 17595 / CGMCC 1.15422 / KT0803) (Gramella forsetii).